Here is a 1499-residue protein sequence, read N- to C-terminus: Ubiquitinating/deubiquitinating enzyme SdeA (1499 aa).

The deubiquitinase stretch occupies residues 1–193 (MPKYVEGVEL…GKALRENTEK (193 aa)). Catalysis depends on for deubiquitinase activity residues His64 and Asp80. Cys118 acts as the Nucleophile; for deubiquitinase activity in catalysis. The tract at residues 760 to 1000 (PPTRLFRGLN…KALAAFPSDT (241 aa)) is mono-ADP-ribosyltransferase. 766–772 (RGLNLSE) contacts NAD(+). The residue at position 860 (Glu860) is a 5-glutamyl glutamate. Glu862 contacts NAD(+). Residues 1059 to 1181 (KEMGTIRREL…IDTKLADAYL (123 aa)) adopt a coiled-coil conformation.

The protein belongs to the SidE family. Interacts with IcmS. Post-translationally, is able to ubiquitinate itself, but this modification is not required to ubiquitinate Rab33b. In terms of processing, glutamylated at Glu-860 by SidJ; glutamylation inhibits SdeA activity to catalyze the production of ADP-ribosylated ubiquitin.

It localises to the secreted. It is found in the host cell. It carries out the reaction L-arginyl-[protein] + NAD(+) = N(omega)-(ADP-D-ribosyl)-L-arginyl-[protein] + nicotinamide + H(+). Its activity is regulated as follows. Ubiquitination catalyzed by SdeA is insensitive to the cysteine alkylation agent maleimide, suggesting that a cysteine conjugation of ubiquitin does not form during the reaction. Its function is as follows. Secreted effector that interferes with the host cell ubiquitin pathway and is required for intracellular bacterial replication. Catalyzes the ubiquitination of several mammalian Rab proteins (Rab33b, Rab1, Rab6a and Rab30) during L.pneumophila infection, without engaging the standard cellular enzyme cascade (E1 and E2). Transfers an ADP-ribose moiety from NAD to the 'Arg-42' residue of ubiquitin in a reaction that releases nicotinamide. The modified ubiquitin is subsequently transferred to serine residues of the substrate protein via a phosphoribose linker that results in the release of AMP. Cannot ubiquitinate the endosomal Rab5 or the cytoskeletal small GTPase Rac1. Also acts as a deubiquitinase (DUB), catalyzing the cleavage of three of the most abundant polyubiquitin chains ('Lys-11', 'Lys-48' and 'Lys-63') with a distinct preference for 'Lys-63' linkages; is thus able to efficiently remove 'Lys-63'-linked polyubiquitin chains from the phagosomal surface. Is also able to remove NEDD8 from neddylated proteins, but is unable to recognize SUMO. The DUB activity of SdeA is important for regulating the dynamics of ubiquitin association with the bacterial phagosome, but is dispensable for its role in intracellular bacterial replication. The protein is Ubiquitinating/deubiquitinating enzyme SdeA of Legionella pneumophila subsp. pneumophila (strain Philadelphia 1 / ATCC 33152 / DSM 7513).